The primary structure comprises 770 residues: ARF GTPase-activating protein GIT1 (770 aa).

An Arf-GAP domain is found at 1-124; sequence MSRKGPRAEV…AFVHKLPCRD (124 aa). The interaction with gamma-tubulin and localization to the centrosome stretch occupies residues 1-124; it reads MSRKGPRAEV…AFVHKLPCRD (124 aa). A C4-type zinc finger spans residues 11-34; the sequence is CADCSAPDPGWASISRGVLVCDEC. ANK repeat units follow at residues 132-161, 166-195, and 199-228; these read DLSK…QANF, KGTT…DPGS, and NGRT…ELTD. Residue Tyr-224 is modified to Phosphotyrosine. The tract at residues 245 to 374 is interaction with PCLO; it reads HYIIPQMADR…QGKSLSSPTD (130 aa). The tract at residues 253–424 is interaction with PTK2/FAK1; sequence DRSRQKCMSQ…NRARSMDSSD (172 aa). Positions 254–376 are interaction with ARHGEF7; it reads RSRQKCMSQS…KSLSSPTDNL (123 aa). Residues 363 to 425 are disordered; the sequence is RQQGKSLSSP…RARSMDSSDL (63 aa). Positions 366–383 are enriched in polar residues; the sequence is GKSLSSPTDNLELSARSQ. 2 positions are modified to phosphoserine: Ser-368 and Ser-371. Thr-373 is modified (phosphothreonine). The interaction with NCK2 and GRIN3A stretch occupies residues 375–596; the sequence is NLELSARSQS…QEGSRHASKL (222 aa). A required for localization at synapses region spans residues 375 to 596; the sequence is NLELSARSQS…QEGSRHASKL (222 aa). Phosphoserine is present on residues Ser-379 and Ser-384. Tyr-392 is modified (phosphotyrosine). Phosphoserine occurs at positions 394 and 397. Residues 394-403 show a composition bias toward acidic residues; sequence SVASDEDTDQ. Thr-401 is subject to Phosphothreonine. Residues Ser-419, Ser-422, and Ser-426 each carry the phosphoserine modification. An interaction with MAPK1 region spans residues 420–475; the sequence is MDSSDLSDGAVTLQEYLELKKALATSEAKVQQLMKVNSSLSDELRRLQREIHKLQA. The interval 429 to 629 is interaction with IKBKG; sequence AVTLQEYLEL…EGKRFLELSK (201 aa). A coiled-coil region spans residues 449 to 483; the sequence is VQQLMKVNSSLSDELRRLQREIHKLQAENLQLRQP. A phosphoserine mark is found at Ser-507 and Ser-545. A Phosphothreonine modification is found at Thr-546. Phosphotyrosine occurs at positions 554 and 563. 4 positions are modified to phosphoserine: Ser-570, Ser-580, Ser-601, and Ser-605. The segment covering 578 to 588 has biased composition (polar residues); it reads PSSPLLSCSQE. Positions 578–615 are disordered; that stretch reads PSSPLLSCSQEGSRHASKLSRHGSGADSDYENTQSGDP. Thr-610 bears the Phosphothreonine mark. A Phosphoserine modification is found at Ser-639. The segment at 646-770 is interaction with PXN and TGFB1I1; that stretch reads PGLPSTEDVI…VTITTREKKQ (125 aa).

Forms homodimers and possibly oligomers. May forms heterooligomers with GIT2. Interacts with G protein-coupled receptor kinases, including GRK2, GRK3, GRK5 and GRK6. Interacts with PPFIA1, PPFIA2 and PPFIA4. Interacts with GRIP1 and forms a ternary complex with PPFIA1 and GRIP1. Directly interacts with ARHGEF7/beta-PIX, forming in vitro a heptameric complex made of a GIT1 dimer and an ARHGEF7 trimer. Directly interacts with PXN/paxillin; this interaction is enhanced in the presence of ARHGEF7. Directly interacts (via C-terminus) with TGFB1I1/Hic-5 (via LD motif 3). Directly interacts with PTK2/FAK1. May interact with PTK2B/PYK2; this interaction may be indirect. Interacts with AMPA receptors GRIA2/3. Directly interacts with protein Piccolo/PCLO. Forms a complex with Ephrin-B1/EFNB1 and NCK2/GRB4 (via SH2); this interaction is important for spine morphogenesis and synapse formation. Interaction with NCK2 is transient and depends upon GIT1 phosphorylation at Tyr-392. Interacts with GRIN3A/GluN3A (via C-terminus); this interaction competes with GIT1 interaction with ARHGEF7 and limits synaptic localization of GIT1. Interacts with IKBKG/NEMO in resting bone mesenchymal stem cells, as well as in TNF-stimulated cells; this interaction may increase IKBKG affinity for 'Lys-63'-linked polyubiquitin chains. Interacts with GABA(A) receptors, including GABRB3 and GABRG2. Interacts with SCRIB. Interacts (via N- and C-terminus) with ENTR1/SDCCAG3 (via N-terminus); this interaction is direct. May form a tripartite complex with ENTR1 and PTPN13. Interacts with YWHAZ. Interacts with PAK1. Interacts with PAK3. Directly interacts (via N-terminus) with gamma-tubulin. Interacts with MAPK1 and MAPK3; this interaction is required for MAPK1/3 recruitment to focal adhesions. Phosphorylated on tyrosine residues by PTK2/FAK1 and SRC in growing fibroblasts. Phosphorylation at Tyr-392 is induced by activation of Ephrin-B1/EFNB1 and catalyzed by SRC family kinases. It is required for the interaction with NCK2 and for GIT1 recruitment to synapses in hippocampal neurons. As to expression, expressed in the brain (at protein level). Also expressed at high levels in lung and heart. In lung, expressed in endothelial cells, especially in capillaries; also expressed in smooth muscle and epithelial cells of bronchi (at protein level). Expressed in bone marrow mesenchymal stem cells, as well as in osteoclasts and bone marrow-derived macrophages (at protein level).

Its subcellular location is the cytoplasm. The protein localises to the presynapse. The protein resides in the postsynapse. It is found in the postsynaptic density. It localises to the cell junction. Its subcellular location is the focal adhesion. The protein localises to the cell projection. The protein resides in the lamellipodium. It is found in the cytoskeleton. It localises to the microtubule organizing center. Its subcellular location is the centrosome. The protein localises to the spindle pole. GTPase-activating protein for ADP ribosylation factor family members, including ARF1. Multidomain scaffold protein that interacts with numerous proteins and therefore participates in many cellular functions, including receptor internalization, focal adhesion remodeling, and signaling by both G protein-coupled receptors and tyrosine kinase receptors. Through PAK1 activation, positively regulates microtubule nucleation during interphase. Plays a role in the regulation of cytokinesis; for this function, may act in a pathway also involving ENTR1 and PTPN13. May promote cell motility both by regulating focal complex dynamics and by the activation of RAC1. May act as scaffold for MAPK1/3 signal transduction, recruiting MAPK1/3 to focal adhesions after EGF stimulation via a Src-dependent pathway, hence stimulating cell migration. Plays a role in brain development and function. Involved in the regulation of spine density and synaptic plasticity that is required for processes involved in learning. Plays an important role in dendritic spine morphogenesis and synapse formation. In hippocampal neurons, recruits guanine nucleotide exchange factors (GEFs), such as ARHGEF7/beta-PIX, to the synaptic membrane. These in turn locally activate RAC1, which is an essential step for spine morphogenesis and synapse formation. May contribute to the organization of presynaptic active zones through oligomerization and formation of a Piccolo/PCLO-based protein network, which includes ARHGEF7/beta-PIX and FAK1. In neurons, through its interaction with liprin-alpha family members, may be required for AMPA receptor (GRIA2/3) proper targeting to the cell membrane. In complex with GABA(A) receptors and ARHGEF7, plays a crucial role in regulating GABA(A) receptor synaptic stability, maintaining GPHN/gephyrin scaffolds and hence GABAergic inhibitory synaptic transmission, by locally coordinating RAC1 and PAK1 downstream effector activity, leading to F-actin stabilization. May also be important for RAC1 downstream signaling pathway through PAK3 and regulation of neuronal inhibitory transmission at presynaptic input. Required for successful bone regeneration during fracture healing. The function in intramembranous ossification may, at least partly, exerted by macrophages in which GIT1 is a key negative regulator of redox homeostasis, IL1B production, and glycolysis, acting through the ERK1/2/NRF2/NFE2L2 axis. May play a role in angiogenesis during fracture healing. In this process, may regulate activation of the canonical NF-kappa-B signal in bone mesenchymal stem cells by enhancing the interaction between NEMO and 'Lys-63'-ubiquitinated RIPK1/RIP1, eventually leading to enhanced production of VEGFA and others angiogenic factors. Essential for VEGF signaling through the activation of phospholipase C-gamma and ERK1/2, hence may control endothelial cell proliferation and angiogenesis. The sequence is that of ARF GTPase-activating protein GIT1 (Git1) from Mus musculus (Mouse).